A 76-amino-acid chain; its full sequence is Alpha-amylase inhibitor Z-2685 (76 aa).

Disulfide bonds link Cys-9-Cys-25 and Cys-43-Cys-70.

In terms of biological role, inhibits mammalian alpha-amylases specifically but has no action on plant and microbial alpha-amylases. The chain is Alpha-amylase inhibitor Z-2685 from Streptomyces rochei (Streptomyces parvullus).